Consider the following 517-residue polypeptide: Maturase K (517 aa).

It belongs to the intron maturase 2 family. MatK subfamily.

It is found in the plastid. The protein resides in the chloroplast. Functionally, usually encoded in the trnK tRNA gene intron. Probably assists in splicing its own and other chloroplast group II introns. In Paris tetraphylla, this protein is Maturase K.